A 379-amino-acid chain; its full sequence is MEVKSLLMVMATLTIAGCSQNEMTEMNPDTNRTIGLDVYTEVQTRGTETTTSTLKANAGFGIFAYQTSSAGWNSEKGNTTPNFMYNEHATWTSDSWGYTNLRFWPIDDKKITFFAYAPYESKPEVGTDQKITLSGQNAKGAPTITFEVKTSNNWKDMIDLVTDCHTAIQDQTNESNKGTVQFKFSHVLTQIANIKVKPDVNLGTDTKIFVTGLKLDPGSTTLYNKAVYKFDNDTWEAISPDASYFSTEQDLSDFLNKTTTDQWGYNKSSINVSDDQNATALFSDTEALYFIPVNNKNGTTNAGDLKLKINYDIVTKVTDTSNLTSTITNKEVSLPKNTFKKGTKHTYVLTIKMNAIKITVEDNMEGWTDDSDSDINVEK.

Positions 1 to 17 (MEVKSLLMVMATLTIAG) are cleaved as a signal peptide. Cysteine 18 is lipidated: N-palmitoyl cysteine. Cysteine 18 carries S-diacylglycerol cysteine lipidation. Positions 18–45 (CSQNEMTEMNPDTNRTIGLDVYTEVQTR) are excised as a propeptide.

Belongs to the bacteroidetes fimbrillin superfamily. Mfa-like family. As to quaternary structure, may be part of the fimbrial tip.

It is found in the fimbrium. The protein resides in the cell outer membrane. Functionally, probably a component of the fimbrium tip. Fimbriae are filamentous appendages on the cell surface that mediate cell adhesion and biofilm formation. This chain is Fimbrium subunit Fim1C (fim1C), found in Phocaeicola vulgatus (strain ATCC 8482 / DSM 1447 / JCM 5826 / CCUG 4940 / NBRC 14291 / NCTC 11154) (Bacteroides vulgatus).